We begin with the raw amino-acid sequence, 139 residues long: Small ribosomal subunit protein uS11 (139 aa).

Positions 1–33 (MPPAKKGPATSARKGQKTRRREKKNVPHGAAHI) are disordered. Over residues 14 to 23 (KGQKTRRREK) the composition is skewed to basic residues.

The protein belongs to the universal ribosomal protein uS11 family. Part of the 30S ribosomal subunit. Interacts with proteins S7 and S18. Binds to IF-3.

Functionally, located on the platform of the 30S subunit, it bridges several disparate RNA helices of the 16S rRNA. Forms part of the Shine-Dalgarno cleft in the 70S ribosome. This chain is Small ribosomal subunit protein uS11, found in Mycobacterium bovis (strain ATCC BAA-935 / AF2122/97).